Reading from the N-terminus, the 631-residue chain is Probable potassium transport system protein Kup 1 (631 aa).

12 helical membrane-spanning segments follow: residues Leu-16 to Tyr-36, Val-58 to Val-78, Val-109 to Pro-129, Pro-145 to Ile-165, Val-173 to Ile-193, Gly-219 to Leu-239, Trp-255 to Leu-275, Leu-288 to Ala-308, Ile-345 to Phe-365, Gly-370 to Val-390, Pro-402 to Ala-422, and Val-427 to Thr-447.

It belongs to the HAK/KUP transporter (TC 2.A.72) family.

The protein localises to the cell inner membrane. It catalyses the reaction K(+)(in) + H(+)(in) = K(+)(out) + H(+)(out). In terms of biological role, transport of potassium into the cell. Likely operates as a K(+):H(+) symporter. The protein is Probable potassium transport system protein Kup 1 of Geobacter sulfurreducens (strain ATCC 51573 / DSM 12127 / PCA).